The primary structure comprises 512 residues: Probable DNA ligase (512 aa).

Glu208 provides a ligand contact to ATP. Lys210 acts as the N6-AMP-lysine intermediate in catalysis. The ATP site is built by Arg215, Arg230, Glu259, Phe299, Arg374, and Lys380.

Belongs to the ATP-dependent DNA ligase family. Mg(2+) is required as a cofactor.

The enzyme catalyses ATP + (deoxyribonucleotide)n-3'-hydroxyl + 5'-phospho-(deoxyribonucleotide)m = (deoxyribonucleotide)n+m + AMP + diphosphate.. Functionally, DNA ligase that seals nicks in double-stranded DNA during DNA replication, DNA recombination and DNA repair. This Streptomyces avermitilis (strain ATCC 31267 / DSM 46492 / JCM 5070 / NBRC 14893 / NCIMB 12804 / NRRL 8165 / MA-4680) protein is Probable DNA ligase.